The primary structure comprises 235 residues: Secretory carrier-associated membrane protein 5B (235 aa).

Topologically, residues 1–39 (MSDKPNNFPPLPRFIPLKPCFYQDFDTDIPDVHRTTAKR) are cytoplasmic. Residues 40–60 (LYYLWMLNSITLGVNLIGCLA) traverse the membrane as a helical segment. The Extracellular segment spans residues 61–67 (WLIGGGG). The chain crosses the membrane as a helical span at residues 68-88 (ATNFGLAFLWLILFTPCSYVC). The Cytoplasmic segment spans residues 89 to 102 (WFRPIYKAFKTDSS). The helical transmembrane segment at 103 to 125 (FNFMAFFFTFTGQLVISIIQAVG) threads the bilayer. The Extracellular portion of the chain corresponds to 126 to 148 (IPGWGVCGWIASISFFGTNVGSA). The helical transmembrane segment at 149–169 (VVMLIPTIMFTAVAVLSFVAL) threads the bilayer. The Cytoplasmic segment spans residues 170-235 (TKVHRFYRGA…TPNYGYSNQM (66 aa)).

Belongs to the SCAMP family. SCAMP5 subfamily.

The protein localises to the cell membrane. Its subcellular location is the golgi apparatus membrane. It is found in the golgi apparatus. The protein resides in the trans-Golgi network membrane. It localises to the recycling endosome membrane. The protein localises to the cytoplasmic vesicle. Its subcellular location is the secretory vesicle. It is found in the synaptic vesicle membrane. In terms of biological role, required for the calcium-dependent exocytosis of signal sequence-containing cytokines. Probably acts in cooperation with the SNARE machinery. This Xenopus laevis (African clawed frog) protein is Secretory carrier-associated membrane protein 5B (scamp5-b).